The sequence spans 207 residues: Protein DMP1 (207 aa).

Positions 1-20 (MSETSLLIPKTNSPASSENM) are disordered. The next 4 helical transmembrane spans lie at 33 to 53 (LIKLLPTGTLFIYLLLNPVLT), 64 to 84 (VMSSILVALCSFSCVFSCFTD), 121 to 141 (IADFVHAGFVLAVFGTLVLLD), and 159 to 179 (LVMALPPAVGVASATIFALFP).

This sequence belongs to the plant DMP1 protein family. In terms of tissue distribution, expressed in leaves, siliques and roots.

Its subcellular location is the endoplasmic reticulum membrane. It localises to the vacuole membrane. In terms of biological role, involved in membrane remodeling including fission during breakdown of the endoplasmic reticulum (ER) and the tonoplast during leaf senescence and in membrane fusion during vacuole biogenesis in roots. The chain is Protein DMP1 from Arabidopsis thaliana (Mouse-ear cress).